We begin with the raw amino-acid sequence, 225 residues long: Biosynthetic peptidoglycan transglycosylase (225 aa).

Residues 9–29 (LLIFIGAILLIQLWIFSSLVW) form a helical membrane-spanning segment.

The protein belongs to the glycosyltransferase 51 family.

Its subcellular location is the cell inner membrane. It catalyses the reaction [GlcNAc-(1-&gt;4)-Mur2Ac(oyl-L-Ala-gamma-D-Glu-L-Lys-D-Ala-D-Ala)](n)-di-trans,octa-cis-undecaprenyl diphosphate + beta-D-GlcNAc-(1-&gt;4)-Mur2Ac(oyl-L-Ala-gamma-D-Glu-L-Lys-D-Ala-D-Ala)-di-trans,octa-cis-undecaprenyl diphosphate = [GlcNAc-(1-&gt;4)-Mur2Ac(oyl-L-Ala-gamma-D-Glu-L-Lys-D-Ala-D-Ala)](n+1)-di-trans,octa-cis-undecaprenyl diphosphate + di-trans,octa-cis-undecaprenyl diphosphate + H(+). It functions in the pathway cell wall biogenesis; peptidoglycan biosynthesis. Its function is as follows. Peptidoglycan polymerase that catalyzes glycan chain elongation from lipid-linked precursors. In Acinetobacter baumannii (strain SDF), this protein is Biosynthetic peptidoglycan transglycosylase.